We begin with the raw amino-acid sequence, 134 residues long: Large ribosomal subunit protein eL14 (134 aa).

This sequence belongs to the eukaryotic ribosomal protein eL14 family. In terms of assembly, component of the large ribosomal subunit (LSU). Mature yeast ribosomes consist of a small (40S) and a large (60S) subunit. The 40S small subunit contains 1 molecule of ribosomal RNA (18S rRNA) and at least 33 different proteins. The large 60S subunit contains 3 rRNA molecules (25S, 5.8S and 5S rRNA) and at least 46 different proteins.

It is found in the cytoplasm. The protein resides in the nucleus. Its function is as follows. Component of the ribosome, a large ribonucleoprotein complex responsible for the synthesis of proteins in the cell. The small ribosomal subunit (SSU) binds messenger RNAs (mRNAs) and translates the encoded message by selecting cognate aminoacyl-transfer RNA (tRNA) molecules. The large subunit (LSU) contains the ribosomal catalytic site termed the peptidyl transferase center (PTC), which catalyzes the formation of peptide bonds, thereby polymerizing the amino acids delivered by tRNAs into a polypeptide chain. The nascent polypeptides leave the ribosome through a tunnel in the LSU and interact with protein factors that function in enzymatic processing, targeting, and the membrane insertion of nascent chains at the exit of the ribosomal tunnel. The sequence is that of Large ribosomal subunit protein eL14 (rpl14) from Schizosaccharomyces pombe (strain 972 / ATCC 24843) (Fission yeast).